We begin with the raw amino-acid sequence, 254 residues long: Alcohol dehydrogenase (254 aa).

10 to 33 (FVAGLGGIGFDTSREIVKSGPKNL) serves as a coordination point for NAD(+). Residue serine 138 participates in substrate binding. Tyrosine 151 serves as the catalytic Proton acceptor.

The protein belongs to the short-chain dehydrogenases/reductases (SDR) family. In terms of assembly, homodimer.

The enzyme catalyses a primary alcohol + NAD(+) = an aldehyde + NADH + H(+). It catalyses the reaction a secondary alcohol + NAD(+) = a ketone + NADH + H(+). The chain is Alcohol dehydrogenase (Adh) from Drosophila mayaguana (Fruit fly).